Here is a 134-residue protein sequence, read N- to C-terminus: Transcription antitermination protein NusB (134 aa).

It belongs to the NusB family.

Its function is as follows. Involved in transcription antitermination. Required for transcription of ribosomal RNA (rRNA) genes. Binds specifically to the boxA antiterminator sequence of the ribosomal RNA (rrn) operons. The polypeptide is Transcription antitermination protein NusB (Shewanella baltica (strain OS223)).